The primary structure comprises 236 residues: Small ribosomal subunit protein uS2c (236 aa).

It belongs to the universal ribosomal protein uS2 family.

Its subcellular location is the plastid. It localises to the chloroplast. The sequence is that of Small ribosomal subunit protein uS2c (rps2) from Guizotia abyssinica (Niger).